We begin with the raw amino-acid sequence, 1153 residues long: Bifunctional dioxygenase (DOX)-epoxy alcohol synthase (EAS) (1153 aa).

The segment covering 46–56 has biased composition (low complexity); sequence SSKESPSRKSS. Residues 46–113 are disordered; that stretch reads SSKESPSRKS…TQHGDGTYPT (68 aa). Over residues 57–74 the composition is skewed to polar residues; that stretch reads TIGQSTRNGSCQADTQKG. A compositionally biased stretch (basic and acidic residues) spans 81–98; the sequence is EKPKPVKENPMKKLKEMS. A fatty acid alpha-dioxygenase region spans residues 177–525; the sequence is TDSLINELWE…DGKFDDDDLV (349 aa). His276 serves as a coordination point for heme b. Tyr454 is a catalytic residue. His457 contacts heme b. The segment at 732 to 1153 is epoxy alcohol synthase; that stretch reads RVNITSYGGA…VTMRVMWDDE (422 aa). Cys1086 contacts heme.

In the N-terminal section; belongs to the peroxidase family. The protein in the C-terminal section; belongs to the cytochrome P450 family. As to quaternary structure, homotetramer. Heme b serves as cofactor. Requires heme as cofactor.

It carries out the reaction (9Z)-octadecenoate + O2 = (8R)-hydroperoxy-(9Z)-octadecenoate. The catalysed reaction is (9Z)-octadecenoate + O2 = 10-hydroperoxy-(8E)-octadecenoate. It catalyses the reaction (9Z,12Z)-octadecadienoate + O2 = (8E,10R,12Z)-10-hydroperoxyoctadeca-8,12-dienoate. The enzyme catalyses (9Z,12Z,15Z)-octadecatrienoate + O2 = (10R)-hydroperoxy-(8E,12Z,15Z)-octadecatrienoate. It carries out the reaction (9Z,12Z,15Z)-octadecatrienoate + O2 = (8R)-hydroperoxy-(9Z,12Z,15Z)-octadecatrienoate. The catalysed reaction is (11Z,14Z)-eicosadienoate + O2 = 12-hydroperoxy-(10E,14Z)-eicosadienoate. It catalyses the reaction (11Z,14Z,17Z)-eicosatrienoate + O2 = 12-hydroperoxy-(10E,14Z,17Z)-eicosatrienoate. The enzyme catalyses (12R,13S)-epoxy-(9Z)-octadecenoate + O2 = (12R,13S)-epoxy-(10R)-hydroperoxy-(8E)-octadecenoate. It carries out the reaction (8E,10R,12Z)-10-hydroperoxyoctadeca-8,12-dienoate = (12S,13R)-epoxy-(10R)-hydroxy-(8E)-octadecenoate. The catalysed reaction is (10R)-hydroperoxy-(8E,12Z,15Z)-octadecatrienoate = 12,13-epoxy-(10R)-hydroxy-(8E,15Z)-octadecadienoate. It catalyses the reaction 12-hydroperoxy-(10E,14Z)-eicosadienoate = 10,11-epoxy-12-hydroxy-(14Z)-eicosenoate. The enzyme catalyses 12-hydroperoxy-(10E,14Z,17Z)-eicosatrienoate = 14,15-epoxy-12-hydroxy-(10E,17Z)-eicosadienoate. It carries out the reaction (13R)-hydroperoxy-(9Z,11E)-octadecadienoate = (12R,13R)-epoxy-(11S)-hydroxy-(9Z)-octadecenoate. The catalysed reaction is (13S)-hydroperoxy-(9Z,11E)-octadecadienoate = (12R,13R)-epoxy-(11S)-hydroxy-(9Z)-octadecenoate. It catalyses the reaction 12-hydroperoxy-(10E,14Z)-eicosadienoate = 14,15-epoxy-12-hydroxy-(10E)-eicosenoate. The enzyme catalyses 12-hydroperoxy-(10E,14Z,17Z)-eicosatrienoate = 10,11-epoxy-12-hydroxy-(14Z,17Z)-eicosadienoate. In terms of biological role, bifunctional dioxygenase (DOX)-epoxy alcohol synthase (EAS) that converts linoleic acid (18:2n-6) sequentially to 10(R)-hydroperoxy-8(E),12(Z)-octadecadienoic acid (10R-HPODE) and 10R-HPODE further to 12 S(13R)-epoxy-10(R)-hydroxy-8(E)-octadecenoic acid as the end product. Oxygenation at C-10 occurs by retention of the pro-R hydrogen of C-8 of 18:2n-6, suggesting antarafacial hydrogen abstraction and oxygenation. The epoxy alcohol is formed from 10R-HPODE, likely by heterolytic cleavage of the dioxygen bond and subsequent intramolecular epoxidation of the 12(Z) double bond. The DOX domain is also able to oxygenate position C-8 of linoleic acid to produce 8(R)-hydroperoxy-8(E),12(Z)-octadecadienoic acid (8R-HPODE). Moreover, the DOX domain can oxygenate alpha-linolenic acid (18:3n-3) at C-8 or C-10 to produce respectively 8HOTrE and 10HOTrE, oleic acid (18:1n-9) at C-8 or C-10 to produce respectively 8-H(P)OME and 10-H(P)OME (with 8R stereoisomer to over 95%), eicosadienoic acid (20:2n-6) at C-10 or C-12 to produce respectively 10(11)-epoxy-12-hydroxy-14(Z)-eicosenoic acid and 14(15)-epoxy-12-hydroxy-10(E)-eicosenoic acid, as well as eicosatrienoic acid (20:3n-3) at C-10 or C-12 to produce respectively 10(11)-epoxy-12-hydroxy-14(Z),17(Z)-eicosadienoic acid and 14(15)-epoxy-12-hydroxy-14(Z),17(Z)-eicosadienoic acid. On the other side, the enzyme EAS domain can also catalyze the conversion of 10HOTrE into 12(13)-epoxy-10(R)-hydroxy-8(E),15(Z)-octadecadienoic acid, 13-R-HPODE into the stereoisomers of 12(13)-epoxy-11-hydroxy-9(Z)-octadecenoic acids (erythro/threo, 1:4), as well as 13S-HPODE into the stereoisomers of 12(13)-epoxy-11-hydroxy-9(Z)-octadecenoic acids (erythro/threo, 1:4) (EAS activity). Gamma-linolenic acid (18:3n-6) is not a substrate. This Pyricularia oryzae (strain 70-15 / ATCC MYA-4617 / FGSC 8958) (Rice blast fungus) protein is Bifunctional dioxygenase (DOX)-epoxy alcohol synthase (EAS).